We begin with the raw amino-acid sequence, 336 residues long: Phosphatidylglycerol--prolipoprotein diacylglyceryl transferase (336 aa).

Transmembrane regions (helical) follow at residues 16 to 36 (IGPV…VLAV), 53 to 73 (ILDI…IYHI), and 93 to 113 (IWNG…AAWA). Residue Arg-141 participates in a 1,2-diacyl-sn-glycero-3-phospho-(1'-sn-glycerol) binding. Helical transmembrane passes span 190–210 (PTFL…VFLG), 220–240 (GSLF…IEAL), and 253–273 (INVW…IVIQ).

This sequence belongs to the Lgt family.

It localises to the cell membrane. The catalysed reaction is L-cysteinyl-[prolipoprotein] + a 1,2-diacyl-sn-glycero-3-phospho-(1'-sn-glycerol) = an S-1,2-diacyl-sn-glyceryl-L-cysteinyl-[prolipoprotein] + sn-glycerol 1-phosphate + H(+). It participates in protein modification; lipoprotein biosynthesis (diacylglyceryl transfer). Functionally, catalyzes the transfer of the diacylglyceryl group from phosphatidylglycerol to the sulfhydryl group of the N-terminal cysteine of a prolipoprotein, the first step in the formation of mature lipoproteins. The polypeptide is Phosphatidylglycerol--prolipoprotein diacylglyceryl transferase (Bifidobacterium adolescentis (strain ATCC 15703 / DSM 20083 / NCTC 11814 / E194a)).